We begin with the raw amino-acid sequence, 230 residues long: Orotidine 5'-phosphate decarboxylase (230 aa).

Residues aspartate 8, lysine 30, 59 to 68, threonine 118, arginine 178, glutamine 187, glycine 207, and arginine 208 contribute to the substrate site; that span reads DLKLYDIPNT. Catalysis depends on lysine 61, which acts as the Proton donor.

Belongs to the OMP decarboxylase family. Type 1 subfamily. In terms of assembly, homodimer.

The enzyme catalyses orotidine 5'-phosphate + H(+) = UMP + CO2. It functions in the pathway pyrimidine metabolism; UMP biosynthesis via de novo pathway; UMP from orotate: step 2/2. In terms of biological role, catalyzes the decarboxylation of orotidine 5'-monophosphate (OMP) to uridine 5'-monophosphate (UMP). This is Orotidine 5'-phosphate decarboxylase from Sulfurovum sp. (strain NBC37-1).